Here is a 481-residue protein sequence, read N- to C-terminus: Glycogen synthase (481 aa).

Residue lysine 15 coordinates ADP-alpha-D-glucose.

The protein belongs to the glycosyltransferase 1 family. Bacterial/plant glycogen synthase subfamily.

The catalysed reaction is [(1-&gt;4)-alpha-D-glucosyl](n) + ADP-alpha-D-glucose = [(1-&gt;4)-alpha-D-glucosyl](n+1) + ADP + H(+). It functions in the pathway glycan biosynthesis; glycogen biosynthesis. Functionally, synthesizes alpha-1,4-glucan chains using ADP-glucose. The chain is Glycogen synthase from Thermosipho melanesiensis (strain DSM 12029 / CIP 104789 / BI429).